The chain runs to 1344 residues: Myb-binding protein 1A (1344 aa).

The segment at 1-24 (MAEMKSPTKAEPASPAEAPQGDRR) is disordered. Position 2 is an N-acetylalanine (Ala2). The segment at 2 to 580 (AEMKSPTKAE…WDQMMSTLKE (579 aa)) is interaction with MYB. Ser14 carries the post-translational modification Phosphoserine. N6-acetyllysine is present on residues Lys69 and Lys156. 2 consecutive short sequence motifs (nuclear export signal) follow at residues 238 to 256 (SEDN…ANSV) and 261 to 279 (KLPD…ENKF). Disordered stretches follow at residues 696-752 (NEDE…DVDP) and 1150-1344 (PKSE…VQTP). Residues 708–730 (TDEKQLKHGEDADSDSEDSKNSE) are compositionally biased toward basic and acidic residues. Residues 731 to 746 (SDVDSEDGEESEEEDR) are compositionally biased toward acidic residues. Residues 1150–1161 (PKSEKKNVKDIP) are compositionally biased toward basic and acidic residues. Lys1151 is covalently cross-linked (Glycyl lysine isopeptide (Lys-Gly) (interchain with G-Cter in SUMO2)). The required for nuclear and nucleolar localization stretch occupies residues 1154-1344 (KKNVKDIPSD…RVARRRVQTP (191 aa)). Phosphoserine is present on residues Ser1162 and Ser1166. Positions 1170 to 1187 (TKRKKKGFLPETKKRKKL) are enriched in basic residues. The residue at position 1189 (Ser1189) is a Phosphoserine. Position 1193 is a phosphothreonine (Thr1193). A phosphoserine mark is found at Ser1221 and Ser1246. A compositionally biased stretch (low complexity) spans 1247-1256 (PAPNNPTLSP). Thr1253 is subject to Phosphothreonine. A Phosphoserine modification is found at Ser1255. Phosphothreonine is present on residues Thr1258 and Thr1280. Residues Ser1283, Ser1305, and Ser1318 each carry the phosphoserine modification. The span at 1301 to 1316 (VKRRSSQSALPKKRAR) shows a compositional bias: basic residues. Low complexity predominate over residues 1317 to 1329 (LSLVSRSPSLLQS). At Arg1322 the chain carries Citrulline. Ser1323, Ser1325, and Ser1329 each carry phosphoserine. Residues 1331–1344 (IRKRRVARRRVQTP) are compositionally biased toward basic residues.

This sequence belongs to the MYBBP1A family. Binds to and represses JUN and MYB via the leucine zipper regions present in these proteins. Also binds to and represses PPARGC1A: this interaction is abrogated when PPARGC1A is phosphorylated by MAPK1/ERK. Binds to and stimulates transcription by AHR. Binds to KPNA2. Component of the B-WICH complex, at least composed of SMARCA5/SNF2H, BAZ1B/WSTF, SF3B1, DEK, MYO1C, ERCC6, MYBBP1A and DDX21. Interacts with CLOCK and CRY1. Citrullinated by PADI4.

The protein resides in the nucleus. It localises to the nucleolus. The protein localises to the cytoplasm. May activate or repress transcription via interactions with sequence specific DNA-binding proteins. Repression may be mediated at least in part by histone deacetylase activity (HDAC activity). Acts as a corepressor and in concert with CRY1, represses the transcription of the core circadian clock component PER2. Preferentially binds to dimethylated histone H3 'Lys-9' (H3K9me2) on the PER2 promoter. Has a role in rRNA biogenesis together with PWP1. The polypeptide is Myb-binding protein 1A (Mybbp1a) (Rattus norvegicus (Rat)).